The sequence spans 149 residues: UPF0756 membrane protein BBR47_32760 (149 aa).

5 consecutive transmembrane segments (helical) span residues Trp3–Val23, His48–Gly68, Leu85–Met105, Ser106–Phe126, and Gly128–Pro148.

It belongs to the UPF0756 family.

The protein localises to the cell membrane. This Brevibacillus brevis (strain 47 / JCM 6285 / NBRC 100599) protein is UPF0756 membrane protein BBR47_32760.